Reading from the N-terminus, the 440-residue chain is Xaa-Pro dipeptidase (440 aa).

The Mn(2+) site is built by D244, D255, H336, E381, and E420.

The protein belongs to the peptidase M24B family. Bacterial-type prolidase subfamily. It depends on Mn(2+) as a cofactor.

It carries out the reaction Xaa-L-Pro dipeptide + H2O = an L-alpha-amino acid + L-proline. Functionally, splits dipeptides with a prolyl residue in the C-terminal position. The sequence is that of Xaa-Pro dipeptidase from Pseudoalteromonas translucida (strain TAC 125).